Consider the following 163-residue polypeptide: Adenosine 5'-monophosphoramidase HINT2 (163 aa).

Residues 1-17 constitute a mitochondrion transit peptide; it reads MAAAVVLAAGLRAARRA. Residues 55–163 form the HIT domain; sequence IFSRILDKSL…GGRQLQWPPG (109 aa). S63 and D80 together coordinate AMP. N6-acetyllysine is present on K119. N136 lines the AMP pocket. K139 bears the N6-acetyllysine mark. AMP contacts are provided by residues 142 to 145 and 149 to 151; these read AQSV and HIH. Residues 147-151 carry the Histidine triad motif motif; sequence HLHIH. Catalysis depends on H149, which acts as the Tele-AMP-histidine intermediate.

It belongs to the HINT family. High expression in liver and pancreas. Expression is significantly down-regulated in hepatocellular carcinoma (HCC) patients.

It localises to the mitochondrion. It catalyses the reaction adenosine 5'-phosphoramidate + H2O = AMP + NH4(+). Functionally, exhibits adenosine 5'-monophosphoramidase activity, hydrolyzing purine nucleotide phosphoramidates with a single phosphate group such as adenosine 5'monophosphoramidate (AMP-NH2) to yield AMP and NH2. Hydrolyzes adenosine 5'-O-p-nitrophenylphosphoramidate (AMP-pNA). Hydrolyzes fluorogenic purine nucleoside tryptamine phosphoramidates in vitro. May be involved in steroid biosynthesis. May play a role in apoptosis. The chain is Adenosine 5'-monophosphoramidase HINT2 from Homo sapiens (Human).